The primary structure comprises 329 residues: Ankyrin repeat and SOCS box protein 5 (329 aa).

ANK repeat units lie at residues 69–98 (ADRS…NVNA), 102–131 (DHVT…NVNA), 135–164 (DGVT…KPQL), 167–196 (CLPS…DVDQ), 200–229 (HLGT…DVQK), and 232–261 (YWDT…DINA). Positions 278-329 (LVERLLLQHEATPSSLCQLCRLCIRNYIGRPRLHLIPQLQLPTLLQNFLQYR) constitute an SOCS box domain.

The protein belongs to the ankyrin SOCS box (ASB) family.

Its pathway is protein modification; protein ubiquitination. Functionally, may be a substrate-recognition component of a SCF-like ECS (Elongin-Cullin-SOCS-box protein) E3 ubiquitin-protein ligase complex which mediates the ubiquitination and subsequent proteasomal degradation of target proteins. May play a role in the initiation of arteriogenesis. This chain is Ankyrin repeat and SOCS box protein 5 (ASB5), found in Bos taurus (Bovine).